A 205-amino-acid chain; its full sequence is Glycerol-3-phosphate acyltransferase (205 aa).

Residues Met1–Ala3 are Periplasmic-facing. A helical transmembrane segment spans residues Ile4 to Val24. The Cytoplasmic segment spans residues Cys25–Lys52. Residues Gly53–Ala73 traverse the membrane as a helical segment. The Periplasmic segment spans residues Tyr74–Pro80. A helical membrane pass occupies residues Phe81–Gly101. The Cytoplasmic portion of the chain corresponds to Phe102 to Ala111. A helical transmembrane segment spans residues Phe112 to Leu132. Residues Thr133 to Ser137 lie on the Periplasmic side of the membrane. The helical transmembrane segment at Gly138–Phe158 threads the bilayer. The Cytoplasmic portion of the chain corresponds to Lys159–Glu205.

This sequence belongs to the PlsY family. Probably interacts with PlsX.

The protein localises to the cell inner membrane. It catalyses the reaction sn-glycerol 3-phosphate + an acyl-CoA = a 1-acyl-sn-glycero-3-phosphate + CoA. The catalysed reaction is a fatty acyl-[ACP] + sn-glycerol 3-phosphate = a 1-acyl-sn-glycero-3-phosphate + holo-[ACP]. It participates in lipid metabolism; phospholipid metabolism. Its function is as follows. Catalyzes the transfer of an acyl group from acyl-ACP to glycerol-3-phosphate (G3P) to form lysophosphatidic acid (LPA). This enzyme can also utilize acyl-CoA as fatty acyl donor, but not acyl-PO(4). This Shigella flexneri serotype 5b (strain 8401) protein is Glycerol-3-phosphate acyltransferase.